The sequence spans 208 residues: Small ribosomal subunit protein uS4 (208 aa).

The segment at 30-49 (EKRPYAPGEHGRDRRRTESD) is disordered. One can recognise an S4 RNA-binding domain in the interval 95–161 (TRLDNLVLRA…VPFQIAAEGV (67 aa)).

The protein belongs to the universal ribosomal protein uS4 family. In terms of assembly, part of the 30S ribosomal subunit. Contacts protein S5. The interaction surface between S4 and S5 is involved in control of translational fidelity.

Its function is as follows. One of the primary rRNA binding proteins, it binds directly to 16S rRNA where it nucleates assembly of the body of the 30S subunit. Functionally, with S5 and S12 plays an important role in translational accuracy. The protein is Small ribosomal subunit protein uS4 of Bifidobacterium longum (strain DJO10A).